The chain runs to 123 residues: Guanine nucleotide exchange factor MSS4 (123 aa).

The residue at position 1 (methionine 1) is an N-acetylmethionine. The region spanning 9 to 123 (ELVSAEGRNR…YVALERVSHE (115 aa)) is the MSS4 domain. The Zn(2+) site is built by cysteine 23, cysteine 26, cysteine 94, and cysteine 97.

Belongs to the DSS4/MSS4 family. As to quaternary structure, interacts with RAB8A. In terms of tissue distribution, ubiquitous.

Functionally, guanine-nucleotide-releasing protein that acts on members of the SEC4/YPT1/RAB subfamily. Stimulates GDP release from both YPT1, RAB3A and RAB10, but is less active on these proteins than on the SEC4 protein. Might play a general role in vesicular transport. The chain is Guanine nucleotide exchange factor MSS4 (Rabif) from Rattus norvegicus (Rat).